The sequence spans 512 residues: Protein singed (512 aa).

This sequence belongs to the fascin family. As to quaternary structure, interacts with Rab35, with stronger binding to the Rab35-GTP form compared to the Rab35-GDP form.

The protein localises to the cytoplasm. Its subcellular location is the cytoskeleton. Functionally, acts as an actin bundling protein. May have a role in the asymmetric organization and/or movement of cytoplasmic components. It has a role in somatic cells during the formation of adult bristles and hairs, and in the female germline during oogenesis. This chain is Protein singed (sn), found in Drosophila melanogaster (Fruit fly).